A 380-amino-acid polypeptide reads, in one-letter code: Cytochrome b (380 aa).

The next 4 membrane-spanning stretches (helical) occupy residues 34–54 (FGSLLGVCLIAQIATGLFLAM), 78–99 (WLLRNLHANGASFFFICIYFHI), 114–134 (WNIGVILLFLVMATAFVGYVL), and 179–199 (FFTFHFILPFIIAAASMINLL). Heme b is bound by residues His-84 and His-98. His-183 provides a ligand contact to heme b. His-202 lines the a ubiquinone pocket. The next 4 helical transmembrane spans lie at 227–247 (YKDLLGFVIMLGALASLSTFA), 289–309 (LGGVLALLLSIMILFLMPIIH), 321–341 (IAKTFFWALIANTAILTWIGG), and 348–368 (FITIGQIASGLYFLIFVLLIP).

This sequence belongs to the cytochrome b family. In terms of assembly, the cytochrome bc1 complex contains 3 respiratory subunits (MT-CYB, CYC1 and UQCRFS1), 2 core proteins (UQCRC1 and UQCRC2) and probably 6 low-molecular weight proteins. Heme b serves as cofactor.

The protein localises to the mitochondrion inner membrane. Its function is as follows. Component of the ubiquinol-cytochrome c reductase complex (complex III or cytochrome b-c1 complex) that is part of the mitochondrial respiratory chain. The b-c1 complex mediates electron transfer from ubiquinol to cytochrome c. Contributes to the generation of a proton gradient across the mitochondrial membrane that is then used for ATP synthesis. The chain is Cytochrome b (mt-cyb) from Pelophylax plancyi (Korean pond frog).